Here is a 189-residue protein sequence, read N- to C-terminus: Protein GrpE (189 aa).

Residues 1-31 (MSKKHMKGNGGEVPENSEMSGSEELVAVEPG) form a disordered region.

The protein belongs to the GrpE family. In terms of assembly, homodimer.

Its subcellular location is the cytoplasm. Functionally, participates actively in the response to hyperosmotic and heat shock by preventing the aggregation of stress-denatured proteins, in association with DnaK and GrpE. It is the nucleotide exchange factor for DnaK and may function as a thermosensor. Unfolded proteins bind initially to DnaJ; upon interaction with the DnaJ-bound protein, DnaK hydrolyzes its bound ATP, resulting in the formation of a stable complex. GrpE releases ADP from DnaK; ATP binding to DnaK triggers the release of the substrate protein, thus completing the reaction cycle. Several rounds of ATP-dependent interactions between DnaJ, DnaK and GrpE are required for fully efficient folding. This chain is Protein GrpE, found in Syntrophobacter fumaroxidans (strain DSM 10017 / MPOB).